We begin with the raw amino-acid sequence, 518 residues long: Chromosomal replication initiator protein DnaA (518 aa).

A domain I, interacts with DnaA modulators region spans residues 1 to 72 (MTLAEFWPLC…VREELAAGRS (72 aa)). Residues 72–180 (SAFVFKPGEG…DAEEARYEQT (109 aa)) are domain II. The segment at 145–178 (EPRQAAGSASRPESAAVAKARTDAQRDAEEARYE) is disordered. The segment covering 164–177 (ARTDAQRDAEEARY) has biased composition (basic and acidic residues). Positions 181–397 (NLSPDYTFDT…GAFNRVGASS (217 aa)) are domain III, AAA+ region. Positions 225, 227, 228, and 229 each coordinate ATP. Residues 398-518 (RFMNRPVIDI…YEKLLILIQN (121 aa)) are domain IV, binds dsDNA.

Belongs to the DnaA family. As to quaternary structure, oligomerizes as a right-handed, spiral filament on DNA at oriC.

The protein localises to the cytoplasm. Plays an essential role in the initiation and regulation of chromosomal replication. ATP-DnaA binds to the origin of replication (oriC) to initiate formation of the DNA replication initiation complex once per cell cycle. Binds the DnaA box (a 9 base pair repeat at the origin) and separates the double-stranded (ds)DNA. Forms a right-handed helical filament on oriC DNA; dsDNA binds to the exterior of the filament while single-stranded (ss)DNA is stabiized in the filament's interior. The ATP-DnaA-oriC complex binds and stabilizes one strand of the AT-rich DNA unwinding element (DUE), permitting loading of DNA polymerase. After initiation quickly degrades to an ADP-DnaA complex that is not apt for DNA replication. Binds acidic phospholipids. The sequence is that of Chromosomal replication initiator protein DnaA from Neisseria meningitidis serogroup A / serotype 4A (strain DSM 15465 / Z2491).